Reading from the N-terminus, the 195-residue chain is Pyridoxal 5'-phosphate synthase subunit PdxT (195 aa).

Residue 46-48 (GES) coordinates L-glutamine. C78 (nucleophile) is an active-site residue. Residues R107 and 136–137 (IR) contribute to the L-glutamine site. Residues H173 and E175 each act as charge relay system in the active site.

This sequence belongs to the glutaminase PdxT/SNO family. In terms of assembly, in the presence of PdxS, forms a dodecamer of heterodimers. Only shows activity in the heterodimer.

The catalysed reaction is aldehydo-D-ribose 5-phosphate + D-glyceraldehyde 3-phosphate + L-glutamine = pyridoxal 5'-phosphate + L-glutamate + phosphate + 3 H2O + H(+). It carries out the reaction L-glutamine + H2O = L-glutamate + NH4(+). It functions in the pathway cofactor biosynthesis; pyridoxal 5'-phosphate biosynthesis. Functionally, catalyzes the hydrolysis of glutamine to glutamate and ammonia as part of the biosynthesis of pyridoxal 5'-phosphate. The resulting ammonia molecule is channeled to the active site of PdxS. This chain is Pyridoxal 5'-phosphate synthase subunit PdxT, found in Dehalococcoides mccartyi (strain ATCC BAA-2266 / KCTC 15142 / 195) (Dehalococcoides ethenogenes (strain 195)).